An 87-amino-acid chain; its full sequence is Small ribosomal subunit protein bS16 (87 aa).

The protein belongs to the bacterial ribosomal protein bS16 family.

This is Small ribosomal subunit protein bS16 from Nitrosospira multiformis (strain ATCC 25196 / NCIMB 11849 / C 71).